Reading from the N-terminus, the 328-residue chain is DNA-directed RNA polymerase subunit alpha (328 aa).

The segment at 1–231 (MIYQMQMPAK…EHVTFFANFS (231 aa)) is alpha N-terminal domain (alpha-NTD). Residues 247–328 (DEFETMRRLL…MDITRYQMKG (82 aa)) form an alpha C-terminal domain (alpha-CTD) region.

This sequence belongs to the RNA polymerase alpha chain family. As to quaternary structure, homodimer. The RNAP catalytic core consists of 2 alpha, 1 beta, 1 beta' and 1 omega subunit. When a sigma factor is associated with the core the holoenzyme is formed, which can initiate transcription.

It catalyses the reaction RNA(n) + a ribonucleoside 5'-triphosphate = RNA(n+1) + diphosphate. Functionally, DNA-dependent RNA polymerase catalyzes the transcription of DNA into RNA using the four ribonucleoside triphosphates as substrates. This is DNA-directed RNA polymerase subunit alpha from Chlorobium luteolum (strain DSM 273 / BCRC 81028 / 2530) (Pelodictyon luteolum).